Here is a 67-residue protein sequence, read N- to C-terminus: Sporulation protein 24 (67 aa).

Ser-24 and Ser-32 each carry phosphoserine.

In terms of processing, phosphorylated during meiosis. During meiosis, exists in both unphosphorylated and phosphorylated forms with the highest degree of phosphorylation occurring in mid-meiosis.

Its subcellular location is the prospore membrane. Required for efficient sporulation. This is Sporulation protein 24 from Saccharomyces cerevisiae (strain ATCC 204508 / S288c) (Baker's yeast).